A 443-amino-acid polypeptide reads, in one-letter code: Omega-6 fatty acid desaturase, chloroplastic (443 aa).

Residues 1 to 64 constitute a chloroplast transit peptide; sequence MASRIADSLF…AKKRIGCIKA (64 aa). Positions 166-170 match the Histidine box-1 motif; it reads HDCAH. The Histidine box-2 signature appears at 202-206; sequence HDRHH. The Histidine box-3 signature appears at 362–366; it reads HIPHH.

This sequence belongs to the fatty acid desaturase type 1 family.

Its subcellular location is the plastid. It localises to the chloroplast membrane. It catalyses the reaction a (9Z)-octadecenoyl-containing glycerolipid + 2 reduced [2Fe-2S]-[ferredoxin] + O2 + 2 H(+) = a (9Z,12Z)-octadecadienoyl-containing glycerolipid + 2 oxidized [2Fe-2S]-[ferredoxin] + 2 H2O. It functions in the pathway lipid metabolism; polyunsaturated fatty acid biosynthesis. Its function is as follows. Chloroplast omega-6 fatty acid desaturase introduces the second double bond in the biosynthesis of 16:3 and 18:3 fatty acids, important constituents of plant membranes. It is thought to use ferredoxin as an electron donor and to act on fatty acids esterified to galactolipids, sulfolipids and phosphatidylglycerol. The polypeptide is Omega-6 fatty acid desaturase, chloroplastic (Brassica napus (Rape)).